We begin with the raw amino-acid sequence, 202 residues long: Proteasome subunit beta 1 (202 aa).

Residue Met1 is a propeptide, removed in mature form; by autocatalysis. Thr2 (nucleophile) is an active-site residue.

The protein belongs to the peptidase T1B family. In terms of assembly, the 20S proteasome core is composed of 14 alpha and 14 beta subunits that assemble into four stacked heptameric rings, resulting in a barrel-shaped structure. The two inner rings, each composed of seven catalytic beta subunits, are sandwiched by two outer rings, each composed of seven alpha subunits. The catalytic chamber with the active sites is on the inside of the barrel. Has a gated structure, the ends of the cylinder being occluded by the N-termini of the alpha-subunits. Is capped at one or both ends by the proteasome regulatory ATPase, PAN.

The protein resides in the cytoplasm. The catalysed reaction is Cleavage of peptide bonds with very broad specificity.. With respect to regulation, the formation of the proteasomal ATPase PAN-20S proteasome complex, via the docking of the C-termini of PAN into the intersubunit pockets in the alpha-rings, triggers opening of the gate for substrate entry. Interconversion between the open-gate and close-gate conformations leads to a dynamic regulation of the 20S proteasome proteolysis activity. Component of the proteasome core, a large protease complex with broad specificity involved in protein degradation. The polypeptide is Proteasome subunit beta 1 (Pyrobaculum aerophilum (strain ATCC 51768 / DSM 7523 / JCM 9630 / CIP 104966 / NBRC 100827 / IM2)).